The sequence spans 363 residues: UDP-N-acetylglucosamine--N-acetylmuramyl-(pentapeptide) pyrophosphoryl-undecaprenol N-acetylglucosamine transferase (363 aa).

Residues 10-12 (TGG), Asn124, Ser195, Ile250, and Gln295 contribute to the UDP-N-acetyl-alpha-D-glucosamine site.

The protein belongs to the glycosyltransferase 28 family. MurG subfamily.

The protein localises to the cell membrane. The enzyme catalyses di-trans,octa-cis-undecaprenyl diphospho-N-acetyl-alpha-D-muramoyl-L-alanyl-D-glutamyl-meso-2,6-diaminopimeloyl-D-alanyl-D-alanine + UDP-N-acetyl-alpha-D-glucosamine = di-trans,octa-cis-undecaprenyl diphospho-[N-acetyl-alpha-D-glucosaminyl-(1-&gt;4)]-N-acetyl-alpha-D-muramoyl-L-alanyl-D-glutamyl-meso-2,6-diaminopimeloyl-D-alanyl-D-alanine + UDP + H(+). It participates in cell wall biogenesis; peptidoglycan biosynthesis. Its function is as follows. Cell wall formation. Catalyzes the transfer of a GlcNAc subunit on undecaprenyl-pyrophosphoryl-MurNAc-pentapeptide (lipid intermediate I) to form undecaprenyl-pyrophosphoryl-MurNAc-(pentapeptide)GlcNAc (lipid intermediate II). In Listeria welshimeri serovar 6b (strain ATCC 35897 / DSM 20650 / CCUG 15529 / CIP 8149 / NCTC 11857 / SLCC 5334 / V8), this protein is UDP-N-acetylglucosamine--N-acetylmuramyl-(pentapeptide) pyrophosphoryl-undecaprenol N-acetylglucosamine transferase.